We begin with the raw amino-acid sequence, 381 residues long: Flagellar P-ring protein (381 aa).

An N-terminal signal peptide occupies residues 1–33; sequence MQFFNTLHPTRPHWLLAALCLIASLLGAGTAQA.

This sequence belongs to the FlgI family. In terms of assembly, the basal body constitutes a major portion of the flagellar organelle and consists of four rings (L,P,S, and M) mounted on a central rod.

It localises to the periplasm. The protein localises to the bacterial flagellum basal body. In terms of biological role, assembles around the rod to form the L-ring and probably protects the motor/basal body from shearing forces during rotation. This is Flagellar P-ring protein from Albidiferax ferrireducens (strain ATCC BAA-621 / DSM 15236 / T118) (Rhodoferax ferrireducens).